A 355-amino-acid polypeptide reads, in one-letter code: Probable dual-specificity RNA methyltransferase RlmN (355 aa).

Glu89 (proton acceptor) is an active-site residue. One can recognise a Radical SAM core domain in the interval Tyr95–Arg322. An intrachain disulfide couples Cys102 to Cys333. The [4Fe-4S] cluster site is built by Cys109, Cys113, and Cys116. Residues Gly159–Glu160, Ser191, Ser214–His216, and Asn290 contribute to the S-adenosyl-L-methionine site. Residue Cys333 is the S-methylcysteine intermediate of the active site.

The protein belongs to the radical SAM superfamily. RlmN family. [4Fe-4S] cluster is required as a cofactor.

Its subcellular location is the cytoplasm. The enzyme catalyses adenosine(2503) in 23S rRNA + 2 reduced [2Fe-2S]-[ferredoxin] + 2 S-adenosyl-L-methionine = 2-methyladenosine(2503) in 23S rRNA + 5'-deoxyadenosine + L-methionine + 2 oxidized [2Fe-2S]-[ferredoxin] + S-adenosyl-L-homocysteine. It carries out the reaction adenosine(37) in tRNA + 2 reduced [2Fe-2S]-[ferredoxin] + 2 S-adenosyl-L-methionine = 2-methyladenosine(37) in tRNA + 5'-deoxyadenosine + L-methionine + 2 oxidized [2Fe-2S]-[ferredoxin] + S-adenosyl-L-homocysteine. Its function is as follows. Specifically methylates position 2 of adenine 2503 in 23S rRNA and position 2 of adenine 37 in tRNAs. This Thermus thermophilus (strain ATCC 27634 / DSM 579 / HB8) protein is Probable dual-specificity RNA methyltransferase RlmN.